The chain runs to 106 residues: Nucleoid-associated protein RPD_0086 (106 aa).

The protein belongs to the YbaB/EbfC family. As to quaternary structure, homodimer.

The protein resides in the cytoplasm. It is found in the nucleoid. Functionally, binds to DNA and alters its conformation. May be involved in regulation of gene expression, nucleoid organization and DNA protection. This chain is Nucleoid-associated protein RPD_0086, found in Rhodopseudomonas palustris (strain BisB5).